A 548-amino-acid polypeptide reads, in one-letter code: Solute carrier family 22 member 7 (548 aa).

12 helical membrane-spanning segments follow: residues 21–41 (VALL…PIFL), 146–166 (AAST…GYLS), 180–200 (VSTL…MFAI), 204–224 (LTGS…LEWL), 234–254 (VLSS…GYLI), 259–279 (WLLL…WWVP), 346–366 (ISLC…GLSL), 376–397 (YQTQ…YLSV), 404–423 (LTQA…RLLV), 432–452 (TVLA…AYLF), 466–486 (MGLT…AALL), and 493–513 (LPKL…LLLP). The disordered stretch occupies residues 522–548 (ETIQDVERKSAPTSLQEEEMPMKQVQN).

The protein belongs to the major facilitator (TC 2.A.1) superfamily. Organic cation transporter (TC 2.A.1.19) family.

The protein localises to the basolateral cell membrane. The protein resides in the apical cell membrane. Its subcellular location is the cell membrane. It carries out the reaction orotate(out) + L-glutamate(in) = orotate(in) + L-glutamate(out). The enzyme catalyses 3',5'-cyclic GMP(in) = 3',5'-cyclic GMP(out). The catalysed reaction is GMP(in) = GMP(out). It catalyses the reaction 2'-deoxyguanosine(in) = 2'-deoxyguanosine(out). It carries out the reaction GDP(in) = GDP(out). The enzyme catalyses guanosine(in) = guanosine(out). The catalysed reaction is GTP(in) = GTP(out). It catalyses the reaction 3',5'-cyclic AMP(in) = 3',5'-cyclic AMP(out). It carries out the reaction creatinine(in) = creatinine(out). The enzyme catalyses prostaglandin E2(out) = prostaglandin E2(in). The catalysed reaction is 2-oxoglutarate(in) = 2-oxoglutarate(out). It catalyses the reaction glutarate(in) = glutarate(out). It carries out the reaction urate(out) = urate(in). The enzyme catalyses estrone 3-sulfate(out) = estrone 3-sulfate(in). Functions as a Na(+)-independent bidirectional multispecific transporter. Contributes to the renal and hepatic elimination of endogenous organic compounds from the systemic circulation into the urine and bile, respectively. Capable of transporting a wide range of purine and pyrimidine nucleobases, nucleosides and nucleotides, with cGMP, 2'deoxyguanosine and GMP being the preferred substrates. Functions as a pH- and chloride-independent cGMP bidirectional facilitative transporter that can regulate both intracellular and extracellular levels of cGMP and may be involved in cGMP signaling pathways. Mediates orotate/glutamate bidirectional exchange and most likely display a physiological role in hepatic release of glutamate into the blood. Involved in renal secretion and possible reabsorption of creatinine. Able to uptake prostaglandin E2 (PGE2) and may contribute to PGE2 renal excretion. Also transports alpha-ketoglutarate and urate. Apart from the orotate/glutamate exchange, the counterions for the uptake of other SLC22A7/OAT2 substrates remain to be identified. This chain is Solute carrier family 22 member 7 (SLC22A7), found in Pongo abelii (Sumatran orangutan).